Consider the following 947-residue polypeptide: Leucine-rich repeat-containing protein 37B (947 aa).

The N-terminal stretch at 1–27 is a signal peptide; sequence MSWLRFWGPWPLLTWQLLSLLVKEAQP. Residues 28-905 are Extracellular-facing; that stretch reads LVWVKDPLQL…EVPGDDYKNK (878 aa). 4 disordered regions span residues 42 to 88, 226 to 257, 294 to 458, and 484 to 514; these read LGPP…ALPQ, YLSMDTLYPGSLPPELRVNADEPPGPPEQVGL, EVEP…PEPT, and SLTEVTGPPTKLESSQDSLVQSETAPEEQKA. Positions 311 to 320 are enriched in polar residues; that stretch reads SMESLAQTPL. N-linked (GlcNAc...) asparagine glycosylation is present at Asn358. 3 stretches are compositionally biased toward polar residues: residues 404–415, 436–445, and 495–507; these read GQAQHSHLTEAT, SPTTEETSAQ, and LESSQDSLVQSET. 6 LRR repeats span residues 556 to 577, 580 to 601, 604 to 625, 628 to 649, 655 to 676, and 679 to 699; these read IFTTLNFQGNYISYLDGNVWKA, WTEKLILSENYLTELPKDSFEG, YLQYLDLSCNKIRYIERQTFES, FLQYINLGCNLITKLSLGTFQA, FLHNLILNRNPLTTVEDPYLFE, and ALKYLDMGTTHITLTTLKNIL. Asn789 is a glycosylation site (N-linked (GlcNAc...) asparagine). Positions 867–897 form a coiled coil; sequence DTDQQKTNYINENMEQNEQKEQKSSELMKEV. The helical transmembrane segment at 906-926 threads the bilayer; it reads LIFAISVTVILIILIIIFCLI. Residues 927-947 lie on the Cytoplasmic side of the membrane; sequence EVNSHKRASEKYKDNPSISGA.

The protein localises to the membrane. The chain is Leucine-rich repeat-containing protein 37B (LRRC37B) from Homo sapiens (Human).